Here is a 349-residue protein sequence, read N- to C-terminus: Short chain dehydrogenase/reductase dpfgH (349 aa).

Residues 9 to 31 (LCIRVVDSLYGSFLYLPLAILFL) traverse the membrane as a helical segment. Positions 65, 89, and 115 each coordinate NADP(+). Asn-118 carries an N-linked (GlcNAc...) asparagine glycan. 2 residues coordinate NADP(+): Asn-142 and Lys-164. Residues Ser-191 and Ser-192 each act as proton donor in the active site. Residues Tyr-223 and Lys-227 each contribute to the NADP(+) site. The active-site Proton acceptor is Tyr-223. The Lowers pKa of active site Tyr role is filled by Lys-227. Asn-334 carries N-linked (GlcNAc...) asparagine glycosylation.

The protein belongs to the short-chain dehydrogenases/reductases (SDR) family.

Its subcellular location is the membrane. It functions in the pathway secondary metabolite biosynthesis; terpenoid biosynthesis. Short chain dehydrogenase/reductase; part of the gene cluster that mediates the biosynthesis of diterpenoid pyrones. The first step of the pathway is the synthesis of the alpha-pyrone moiety by the polyketide synthase dpfgA via condensation of one acetyl-CoA starter unit with 3 malonyl-CoA units and 2 methylations. The alpha-pyrone is then combined with geranylgeranyl pyrophosphate (GGPP) formed by the GGPP synthase dpfgD through the action of the prenyltransferase dpfgC to yield a linear alpha-pyrone diterpenoid. Subsequent steps in the diterpenoid pyrone biosynthetic pathway involve the decalin core formation, which is initiated by the epoxidation of the C10-C11 olefin by the FAD-dependent oxidoreductase dpfgE, and is followed by a cyclization cascade catalyzed by the terpene cyclase dpfgB. The short chain dehydrogenase/reductase dpfgG then oxidizes the 8S hydroxy group to a ketone and the short chain dehydrogenase/reductase dpfgH reduces the ketone to the 8R hydroxy group to yield higginsianin B. Higginsianin B is further methylated by the methyltransferase dpfgI to produce the intermediate named FDDP B. The cytochrome P450 monooxygenase dfgpJ then catalyzes a three-step oxidation at C-27 to generate a carboxylic acid as well as C-26 hydroxylation. Finally, methyltransferase dpfgK methylates the carboxylic acid generated by dpfgJ, yielding the final diterpenoid pyrones from the pathway which were named FDDP D and FDDP E. The sequence is that of Short chain dehydrogenase/reductase dpfgH from Gibberella zeae (strain ATCC MYA-4620 / CBS 123657 / FGSC 9075 / NRRL 31084 / PH-1) (Wheat head blight fungus).